Here is a 196-residue protein sequence, read N- to C-terminus: Molybdenum cofactor guanylyltransferase (196 aa).

GTP is bound by residues 10–12 (LAG), lysine 23, asparagine 51, aspartate 69, and aspartate 99. Residue aspartate 99 participates in Mg(2+) binding.

This sequence belongs to the MobA family. Monomer. Requires Mg(2+) as cofactor.

It localises to the cytoplasm. The enzyme catalyses Mo-molybdopterin + GTP + H(+) = Mo-molybdopterin guanine dinucleotide + diphosphate. In terms of biological role, transfers a GMP moiety from GTP to Mo-molybdopterin (Mo-MPT) cofactor (Moco or molybdenum cofactor) to form Mo-molybdopterin guanine dinucleotide (Mo-MGD) cofactor. In Shewanella woodyi (strain ATCC 51908 / MS32), this protein is Molybdenum cofactor guanylyltransferase.